A 268-amino-acid chain; its full sequence is MGNKKTLEGKVAIVTGGASGIGETAARVFANLGARAVVIADIQSELGREVAESIGAKRCSYVQCDIGDEEQVKSMVEWTATTYGALDVMFCNAGIMSKAESAQTVLELDMSKFDEVMRVNTRGTSACVKQAARKMVELGTKGGAIVCTSSPLASRGGYIDTDYVMSKHAVMGLVRSASMQLGAHGIRVNSVSPMAVLTPLTRRMGLATPADVENAFGRFTSLKGVALTAEHVAEAAAFLASDEAAFITGHDLMVDGGLLCLPFFAPTS.

Residues Gly16–Gly22, Asp41–Gln43, Asp65–Ile66, Asn92, Tyr163–Lys167, and Val196–Leu200 contribute to the NAD(+) site.

It belongs to the short-chain dehydrogenases/reductases (SDR) family.

It carries out the reaction (S)-8-oxocitronellyl enol = cis-trans-nepetalactol. In terms of biological role, functions as a non-oxidoreductive cyclase to promote the formation of cis-trans-nepetalactol. Cis-trans-nepetalactol is then oxidized by NEPS1 into cis-trans-nepetalactone, which belongs to a family of metabolites that are both insect-repellent and have euphoric effect in cats. Binds NAD(+) as classical short-chain dehydrogenase/reductase (SDR), but does not utilize it for its redox-neutral cyclase activity. This Nepeta racemosa (Catmint) protein is (+)-cis,trans-nepetalactol synthase NEPS2.